The following is a 602-amino-acid chain: Elongation factor 4 (602 aa).

The tr-type G domain occupies 2-184 (KKIRNFAIIA…RIVRDIPPPK (183 aa)). GTP-binding positions include 14 to 19 (DHGKST) and 131 to 134 (NKID).

The protein belongs to the TRAFAC class translation factor GTPase superfamily. Classic translation factor GTPase family. LepA subfamily.

The protein resides in the cell membrane. The catalysed reaction is GTP + H2O = GDP + phosphate + H(+). Functionally, required for accurate and efficient protein synthesis under certain stress conditions. May act as a fidelity factor of the translation reaction, by catalyzing a one-codon backward translocation of tRNAs on improperly translocated ribosomes. Back-translocation proceeds from a post-translocation (POST) complex to a pre-translocation (PRE) complex, thus giving elongation factor G a second chance to translocate the tRNAs correctly. Binds to ribosomes in a GTP-dependent manner. In Baumannia cicadellinicola subsp. Homalodisca coagulata, this protein is Elongation factor 4.